Here is a 232-residue protein sequence, read N- to C-terminus: Syntaxin-51 (232 aa).

Residues 1–208 (MASSSDSWMR…NKNMRSGCSC (208 aa)) lie on the Cytoplasmic side of the membrane. Residues 136 to 198 (RQVMREQDEG…RRVQKSLAVM (63 aa)) form the t-SNARE coiled-coil homology domain. Residues 209-229 (MSMLLSVLGIVGLAVVIWMLV) traverse the membrane as a helical; Anchor for type IV membrane protein segment. The Vesicular portion of the chain corresponds to 230–232 (KYM).

This sequence belongs to the syntaxin family. Interacts with VTI11 and either SYP21, or SYP22, or SYP61 in the prevacuolar compartment, or with VTI12 and SYP61 in the trans-Golgi network to form t-SNARE complexes. Expressed in root, leaf, stem, flower and silique.

The protein localises to the golgi apparatus. It is found in the trans-Golgi network membrane. Its subcellular location is the prevacuolar compartment membrane. Functionally, vesicle trafficking protein that functions in the secretory pathway. The polypeptide is Syntaxin-51 (SYP51) (Arabidopsis thaliana (Mouse-ear cress)).